The chain runs to 199 residues: Prefoldin subunit 3 (199 aa).

Met-1 bears the N-acetylmethionine mark.

It belongs to the prefoldin subunit alpha family. Heterohexamer of two PFD-alpha type and four PFD-beta type subunits.

Binds specifically to cytosolic chaperonin (c-CPN) and transfers target proteins to it. Binds to nascent polypeptide chain and promotes folding in an environment in which there are many competing pathways for nonnative proteins. In Saccharomyces cerevisiae (strain ATCC 204508 / S288c) (Baker's yeast), this protein is Prefoldin subunit 3 (PAC10).